The following is a 430-amino-acid chain: Adenylosuccinate synthetase (430 aa).

Residues 13-19 (GDEGKGK) and 41-43 (GHT) contribute to the GTP site. The active-site Proton acceptor is the aspartate 14. Positions 14 and 41 each coordinate Mg(2+). IMP-binding positions include 14 to 17 (DEGK), 39 to 42 (NAGH), threonine 130, arginine 144, glutamine 225, threonine 240, and arginine 304. The active-site Proton donor is the histidine 42. Residue 300–306 (STTGRAR) participates in substrate binding. GTP-binding positions include arginine 306, 332–334 (KLD), and 414–416 (STG).

This sequence belongs to the adenylosuccinate synthetase family. In terms of assembly, homodimer. Mg(2+) serves as cofactor.

The protein resides in the cytoplasm. The catalysed reaction is IMP + L-aspartate + GTP = N(6)-(1,2-dicarboxyethyl)-AMP + GDP + phosphate + 2 H(+). The protein operates within purine metabolism; AMP biosynthesis via de novo pathway; AMP from IMP: step 1/2. Functionally, plays an important role in the de novo pathway of purine nucleotide biosynthesis. Catalyzes the first committed step in the biosynthesis of AMP from IMP. The protein is Adenylosuccinate synthetase of Pseudomonas putida (strain ATCC 700007 / DSM 6899 / JCM 31910 / BCRC 17059 / LMG 24140 / F1).